The sequence spans 1381 residues: EH domain-containing and endocytosis protein 1 (1381 aa).

EH domains are found at residues 14-113 (EQAF…NPAP) and 135-227 (DIAK…IRLE). EF-hand domains are found at residues 47 to 82 (LPGQ…IAQL) and 167 to 202 (LPNQ…IQLC). Residues Asp180, Asp182, Ser184, and Glu191 each contribute to the Ca(2+) site. A Phosphothreonine modification is found at Thr238. A phosphoserine mark is found at Ser241 and Ser244. Thr245 is subject to Phosphothreonine. Residues Ser248 and Ser249 each carry the phosphoserine modification. Thr251 bears the Phosphothreonine mark. Phosphoserine is present on Ser265. The 36-residue stretch at 276-311 (EKKQQFDAIFDSLDKQHAGSLSSAVLVPFFLSSRLN) folds into the EF-hand 3 domain. Residues 277-366 (KKQQFDAIFD…NELLQSPALG (90 aa)) form the EH 3 domain. Residues 389–535 (SKPSLQDMPH…SSPVKRTAST (147 aa)) form a disordered region. Polar residues-rich tracts occupy residues 404–424 (AVNT…NGSL) and 432–447 (PSFS…TVVQ). Ser419 carries the phosphoserine modification. Positions 448 to 470 (NNTNNSFSYDNNNGQATLQQQQP) are enriched in low complexity. A phosphothreonine mark is found at Thr450, Thr477, and Thr487. Polar residues predominate over residues 477-494 (THSSSGLKKFTPTSNFGQ). The residue at position 495 (Ser495) is a Phosphoserine. Residues 593–882 (GEASAQLSNA…RELSERQMNL (290 aa)) adopt a coiled-coil conformation. A Glycyl lysine isopeptide (Lys-Gly) (interchain with G-Cter in ubiquitin) cross-link involves residue Lys674. Position 848 is a phosphoserine (Ser848). The segment at 898–919 (SASNTDTTTKEATSRGNVHEDT) is disordered. Over residues 905 to 919 (TTKEATSRGNVHEDT) the composition is skewed to basic and acidic residues. Residues Ser931, Ser950, Ser964, Ser1008, Ser1012, and Ser1020 each carry the phosphoserine modification. 3 disordered regions span residues 933–1202 (LNVN…KDEF), 1214–1285 (VEED…QVSN), and 1298–1322 (SKAE…NDPI). Residues 937–957 (RVKDDEEKTERTESDVFDRDV) show a composition bias toward basic and acidic residues. Polar residues-rich tracts occupy residues 960–989 (LGSQ…LTET) and 1005–1019 (RSQS…NAPQ). A compositionally biased stretch (basic and acidic residues) spans 1021–1036 (VRDDVELPETLEERDT). 2 stretches are compositionally biased toward polar residues: residues 1037–1049 (INNT…TGNL) and 1061–1073 (ATAS…NETT). Thr1046 is subject to Phosphothreonine. 6 positions are modified to phosphoserine: Ser1069, Ser1087, Ser1093, Ser1095, Ser1096, and Ser1100. Positions 1093-1103 (SVSSIQESPKI) are enriched in polar residues. Thr1111 bears the Phosphothreonine mark. Residues 1127–1139 (SDSSSSDDDEFED) are compositionally biased toward acidic residues. Polar residues-rich tracts occupy residues 1147-1164 (TVKT…SSLE) and 1178-1195 (TSPS…TNSI). 2 positions are modified to phosphoserine: Ser1181 and Ser1187. Positions 1214–1226 (VEEDNGADSESEF) are enriched in acidic residues. Residues 1217-1381 (DNGADSESEF…AATNFLLDSA (165 aa)) form an able to bind biological membranes region. The segment covering 1253–1285 (NAFTGTLTSSSNPTIPKPQVQQQSTSDPAQVSN) has biased composition (polar residues). Thr1307 bears the Phosphothreonine mark. Residue Lys1329 forms a Glycyl lysine isopeptide (Lys-Gly) (interchain with G-Cter in ubiquitin) linkage. The UBA domain maps to 1338-1380 (ATTPKSLAVEELSGMGFTEEEAHNALEKCNWDLEAATNFLLDS). Phosphoserine is present on Ser1343.

The protein belongs to the VDP/USO1/EDE1 family. As to quaternary structure, interacts (via UBA domain) with monoubiquitin and ENT1 (via asparagine-proline-phenylalanine tripeptide motif called NPF). Interacts with PAL1 and SYP1.

The protein resides in the cytoplasm. Functionally, functions at the internalization step of the clathrin-mediated endocytosis (CME) as an early-acting scaffold protein. Requires clathrin adapter proteins, ENT1/2 and YAP1801/2, for normal spatiotemporal dynamics and viability. Binds to biological membranes in a ubiquitin-dependent manner. In Saccharomyces cerevisiae (strain ATCC 204508 / S288c) (Baker's yeast), this protein is EH domain-containing and endocytosis protein 1 (EDE1).